The chain runs to 240 residues: Alkaline phosphatase synthesis transcriptional regulatory protein PhoP (240 aa).

Residues 4–118 (KILVVDDEES…EVNARVKAIL (115 aa)) form the Response regulatory domain. D53 carries the 4-aspartylphosphate modification. The ompR/PhoB-type DNA-binding region spans 136–235 (EGQIVIGDLK…IRGLGYKLEE (100 aa)).

In terms of processing, phosphorylated by PhoR.

It localises to the cytoplasm. Member of the two-component regulatory system PhoP/PhoR involved in the regulation of alkaline phosphatase genes phoA and phoB and of phosphodiesterase. The polypeptide is Alkaline phosphatase synthesis transcriptional regulatory protein PhoP (phoP) (Bacillus subtilis (strain 168)).